We begin with the raw amino-acid sequence, 251 residues long: Triosephosphate isomerase (251 aa).

Residue 9–11 (NWK) coordinates substrate. The active-site Electrophile is H95. E167 (proton acceptor) is an active-site residue. Residues G173, S213, and 234-235 (GG) contribute to the substrate site. Residue S213 is modified to Phosphoserine.

This sequence belongs to the triosephosphate isomerase family. As to quaternary structure, homodimer.

It is found in the cytoplasm. The enzyme catalyses D-glyceraldehyde 3-phosphate = dihydroxyacetone phosphate. Its pathway is carbohydrate biosynthesis; gluconeogenesis. It participates in carbohydrate degradation; glycolysis; D-glyceraldehyde 3-phosphate from glycerone phosphate: step 1/1. In terms of biological role, involved in the gluconeogenesis. Catalyzes stereospecifically the conversion of dihydroxyacetone phosphate (DHAP) to D-glyceraldehyde-3-phosphate (G3P). This chain is Triosephosphate isomerase, found in Bacillus mycoides (strain KBAB4) (Bacillus weihenstephanensis).